The following is a 647-amino-acid chain: DNA mismatch repair protein MutL (647 aa).

Basic and acidic residues predominate over residues 387–400 (SAKPVHEATDEKAE). The tract at residues 387–412 (SAKPVHEATDEKAEPQSTSVKFAERK) is disordered.

This sequence belongs to the DNA mismatch repair MutL/HexB family.

In terms of biological role, this protein is involved in the repair of mismatches in DNA. It is required for dam-dependent methyl-directed DNA mismatch repair. May act as a 'molecular matchmaker', a protein that promotes the formation of a stable complex between two or more DNA-binding proteins in an ATP-dependent manner without itself being part of a final effector complex. This is DNA mismatch repair protein MutL from Streptococcus sanguinis (strain SK36).